The chain runs to 141 residues: Lutropin subunit beta (141 aa).

A signal peptide spans 1-20; it reads MEMLQGLLLLLLLSMGGAWA. 6 disulfide bridges follow: Cys29/Cys77, Cys43/Cys92, Cys46/Cys130, Cys54/Cys108, Cys58/Cys110, and Cys113/Cys120. Residues Asn33 and Asn50 are each glycosylated (N-linked (GlcNAc...) asparagine).

This sequence belongs to the glycoprotein hormones subunit beta family. Heterodimer of a common alpha chain and a unique beta chain which confers biological specificity to thyrotropin, lutropin, follitropin and gonadotropin.

The protein resides in the secreted. Its function is as follows. Promotes spermatogenesis and ovulation by stimulating the testes and ovaries to synthesize steroids. This Gorilla gorilla gorilla (Western lowland gorilla) protein is Lutropin subunit beta (LHB).